Consider the following 551-residue polypeptide: Protein MTL1 (551 aa).

Positions 1–35 (MASCNPTRKKSSASSLSMWRTILMALTTLPLSVLS) are cleaved as a signal peptide. Over 36 to 361 (QELVPANSTT…HSGLSKKNRN (326 aa)) the chain is Extracellular. Disordered stretches follow at residues 108 to 143 (MQVS…IISS), 206 to 227 (PSSS…SYSS), and 243 to 263 (SSSS…SSSS). A helical transmembrane segment spans residues 362 to 382 (IIIGCVVGIGAPLILILLILI). Residues 383-551 (YMFCVQPKKT…PNNGLNITNY (169 aa)) are Cytoplasmic-facing. Positions 429 to 513 (SSDSPIGSNN…SNSNSQDYND (85 aa)) are disordered. The span at 430–441 (SDSPIGSNNIQN) shows a compositional bias: polar residues. The segment covering 466–477 (GYDDDDDDDAND) has biased composition (acidic residues). Phosphoserine occurs at positions 481 and 482. Residues 498–508 (SASYSMSNSNS) show a composition bias toward low complexity.

This sequence belongs to the MID2 like cell wall stress sensor family.

Its subcellular location is the membrane. Its function is as follows. Involved in cell integrity signaling during vegetative growth at elevated temperature. Acts positively on the PKC1-MAPK pathway. Cell membrane sensor of oxidative stress in the cell integrity pathway upstream of PKC1. Required to transmit the oxidative signal to SLT2 and to restore the correct actin organization following oxidative stress. Multicopy suppressor of 1,3-beta-glucan synthase (GS) mutation. Also suppresses RGD1 null mutations. This chain is Protein MTL1 (MTL1), found in Saccharomyces cerevisiae (strain ATCC 204508 / S288c) (Baker's yeast).